Reading from the N-terminus, the 624-residue chain is Kelch-like protein diablo (624 aa).

Positions 1-21 (MGDPLLPGSTGLGSGPAAAAT) are enriched in low complexity. A disordered region spans residues 1–55 (MGDPLLPGSTGLGSGPAAAATGGSGTTGTGLGSGGTSGAERPPSPARLTHTSEKH). A compositionally biased stretch (gly residues) spans 22 to 37 (GGSGTTGTGLGSGGTS). One can recognise a BTB domain in the interval 73 to 140 (CDVVLNVGGR…CYTAHIIVEE (68 aa)). The BACK domain occupies 175–277 (CLGIRAFADT…SPKFLVGTVG (103 aa)). Kelch repeat units follow at residues 324 to 370 (VLFA…VLND), 372 to 418 (LYAV…VLDG), 419 to 465 (FLYA…VLSG), 467 to 512 (LYAI…VFNN), 514 to 559 (IYAV…VVNG), and 560 to 606 (QLYA…VMRA).

Its pathway is protein modification; protein ubiquitination. Functionally, probable substrate-specific adapter of an E3 ubiquitin-protein ligase complex which mediates the ubiquitination and subsequent proteasomal degradation of target proteins. May have a role in synapse differentiation and growth. In Drosophila virilis (Fruit fly), this protein is Kelch-like protein diablo.